Consider the following 229-residue polypeptide: Glycine betaine/carnitine/choline transport system permease protein OpuCD (229 aa).

One can recognise an ABC transmembrane type-1 domain in the interval 22 to 202 (FYRHFLMSVY…LMAVIADLVM (181 aa)). The next 5 helical transmembrane spans lie at 27 to 47 (LMSV…GILI), 55 to 74 (GWVF…AMLA), 78 to 100 (LVMG…LPII), 148 to 168 (ALVI…GGLG), and 182 to 202 (AIIL…DLVM).

It belongs to the binding-protein-dependent transport system permease family. CysTW subfamily. As to quaternary structure, the complex is composed of two ATP-binding proteins (OpuCA), two transmembrane proteins (OpuCB and OpuCD) and a solute-binding protein (OpuCC).

Its subcellular location is the cell membrane. In terms of biological role, involved in a high affinity multicomponent binding-protein-dependent transport system for glycine betaine, carnitine and choline; probably responsible for the translocation of the substrate across the membrane. This is Glycine betaine/carnitine/choline transport system permease protein OpuCD (opuCD) from Bacillus subtilis (strain 168).